The following is a 627-amino-acid chain: Polyadenylate-binding protein, cytoplasmic and nuclear (627 aa).

Positions 1-11 (MSAADANQVQE) are enriched in polar residues. A disordered region spans residues 1-46 (MSAADANQVQESLEKLNLDSAPVASTEETEQTASGETEEAADSAQV). RRM domains are found at residues 51 to 129 (ASLY…WSQR), 139 to 216 (GNIF…KHIS), 232 to 309 (TNVY…RAQK), and 335 to 412 (VNLF…LAQR). Low complexity predominate over residues 511–535 (DFNNGANGGRQQRGYYPNRNQNQKG). Positions 511–537 (DFNNGANGGRQQRGYYPNRNQNQKGRQ) are disordered. One can recognise a PABC domain in the interval 537-618 (QQKDLAAIIA…ALTAFEEYKK (82 aa)).

Belongs to the polyadenylate-binding protein type-1 family.

It is found in the cytoplasm. It localises to the nucleus. In terms of biological role, binds the poly(A) tail of mRNA. Appears to be an important mediator of the multiple roles of the poly(A) tail in mRNA biogenesis, stability and translation. In the nucleus, involved in both mRNA cleavage and polyadenylation. Is also required for efficient mRNA export to the cytoplasm. Acts in concert with a poly(A)-specific nuclease (PAN) to affect poly(A) tail shortening, which may occur concomitantly with either nucleocytoplasmic mRNA transport or translational initiation. In the cytoplasm, stimulates translation initiation and regulates mRNA decay through translation termination-coupled poly(A) shortening, probably mediated by PAN. The chain is Polyadenylate-binding protein, cytoplasmic and nuclear (PAB1) from Debaryomyces hansenii (strain ATCC 36239 / CBS 767 / BCRC 21394 / JCM 1990 / NBRC 0083 / IGC 2968) (Yeast).